Consider the following 81-residue polypeptide: Photosystem I iron-sulfur center (81 aa).

4Fe-4S ferredoxin-type domains are found at residues 2 to 31 (AHSV…MIPW) and 39 to 68 (IASA…VRVY). Residues cysteine 11, cysteine 14, cysteine 17, cysteine 21, cysteine 48, cysteine 51, cysteine 54, and cysteine 58 each coordinate [4Fe-4S] cluster.

The eukaryotic PSI reaction center is composed of at least 11 subunits. Requires [4Fe-4S] cluster as cofactor.

The protein resides in the plastid. Its subcellular location is the chloroplast thylakoid membrane. It carries out the reaction reduced [plastocyanin] + hnu + oxidized [2Fe-2S]-[ferredoxin] = oxidized [plastocyanin] + reduced [2Fe-2S]-[ferredoxin]. Functionally, apoprotein for the two 4Fe-4S centers FA and FB of photosystem I (PSI); essential for photochemical activity. FB is the terminal electron acceptor of PSI, donating electrons to ferredoxin. The C-terminus interacts with PsaA/B/D and helps assemble the protein into the PSI complex. Required for binding of PsaD and PsaE to PSI. PSI is a plastocyanin-ferredoxin oxidoreductase, converting photonic excitation into a charge separation, which transfers an electron from the donor P700 chlorophyll pair to the spectroscopically characterized acceptors A0, A1, FX, FA and FB in turn. The protein is Photosystem I iron-sulfur center of Psilotum nudum (Whisk fern).